The primary structure comprises 50 residues: PhoP/PhoQ regulator MgrB (50 aa).

Over 1–4 the chain is Cytoplasmic; it reads MLDL. Residues 5 to 27 traverse the membrane as a helical segment; that stretch reads NITKLVTTVVIIAACCLFYLLAL. The Periplasmic segment spans residues 28-50; that stretch reads DSYCDQGGTFSTGICAITTIVPW.

Belongs to the MgrB family. As to quaternary structure, probably interacts with the periplasmic domain of PhoQ.

The protein resides in the cell inner membrane. In terms of biological role, phoP-regulated transcription is redox-sensitive, being activated when the periplasm becomes more reducing. MgrB acts between DsbA/DsbB and PhoP/PhoQ in this pathway. Represses PhoP/PhoQ signaling, possibly by binding to the periplasmic domain of PhoQ, altering its activity and that of downstream effector PhoP. This chain is PhoP/PhoQ regulator MgrB, found in Yersinia pestis.